We begin with the raw amino-acid sequence, 240 residues long: Cysteine-rich venom protein (240 aa).

The N-terminal stretch at 1–19 is a signal peptide; it reads MIAFIVLPILAAVLHQSSG. Positions 39 to 166 constitute an SCP domain; sequence DLHNSLRRSV…KYRYFYVCQY (128 aa). 8 disulfides stabilise this stretch: Cys-75-Cys-153, Cys-92-Cys-167, Cys-148-Cys-164, Cys-186-Cys-193, Cys-189-Cys-198, Cys-202-Cys-235, Cys-211-Cys-229, and Cys-220-Cys-233. The ShKT domain occupies 202-235; it reads CTQENTYSNCNSLVQQSSCQDNNMKTKCPASCFC.

It belongs to the CRISP family. In terms of tissue distribution, expressed by the venom gland.

Its subcellular location is the secreted. Functionally, may block ryanodine receptors (RYR). In Protobothrops mucrosquamatus (Taiwan habu), this protein is Cysteine-rich venom protein.